The primary structure comprises 229 residues: Growth factor receptor-bound protein 2-A (229 aa).

Residues 1 to 58 (MEAIAKYDFKATADDELSFKRGDVLKVLNEECDQNWYKAELNGKDGFIPKNYIEMKAH) enclose the SH3 1 domain. The SH2 domain occupies 60–152 (WFFGKIPRAK…NQQIFLRDIE (93 aa)). One can recognise an SH3 2 domain in the interval 168 to 227 (QQPTYVQALFDFDPQEDGELGFRRGDFIQVVDNSDPNWWKGTCLSQTGMFPRNYVTPVNR).

It belongs to the GRB2/sem-5/DRK family.

The protein resides in the nucleus. Its subcellular location is the cytoplasm. It is found in the endosome. It localises to the golgi apparatus. In terms of biological role, adapter protein that provides a critical link between cell surface growth factor receptors and the Ras signaling pathway. Promotes meiotic reinitiation during oocyte maturation. In Xenopus laevis (African clawed frog), this protein is Growth factor receptor-bound protein 2-A (grb2-a).